We begin with the raw amino-acid sequence, 515 residues long: Galactose/methyl galactoside import ATP-binding protein MglA (515 aa).

ABC transporter domains are found at residues 8 to 243 (LEMR…VGRE) and 254 to 499 (IPKE…AKYL). Position 40-47 (40-47 (GENGAGKS)) interacts with ATP.

It belongs to the ABC transporter superfamily. Galactose/methyl galactoside importer (TC 3.A.1.2.3) family. The complex is composed of one ATP-binding protein (MglA), two transmembrane proteins (MglC) and a solute-binding protein (MglB).

The protein resides in the cell membrane. The enzyme catalyses D-galactose(out) + ATP + H2O = D-galactose(in) + ADP + phosphate + H(+). The catalysed reaction is methyl beta-D-galactoside(out) + ATP + H2O = methyl beta-D-galactoside(in) + ADP + phosphate + H(+). Part of the ABC transporter complex MglABC involved in galactose/methyl galactoside import. Responsible for energy coupling to the transport system. In Clostridium perfringens (strain ATCC 13124 / DSM 756 / JCM 1290 / NCIMB 6125 / NCTC 8237 / Type A), this protein is Galactose/methyl galactoside import ATP-binding protein MglA.